The following is a 413-amino-acid chain: Ras association domain-containing protein 5 (413 aa).

The disordered stretch occupies residues 1-103 (MASPAIGQRP…RPRDVRSIFE (103 aa)). Over residues 52–74 (SEDRGGRRSGRRDPEPTPRDCRH) the composition is skewed to basic and acidic residues. A Phorbol-ester/DAG-type zinc finger spans residues 117-165 (GHRFVELALRGGPGWCDLCGREVLRQALRCANCKFTCHSECRSLIQLDC). 2 positions are modified to phosphoserine: Ser-177 and Ser-274. Residues 265 to 359 (PAATTDKRTS…LSFVLKENET (95 aa)) form the Ras-associating domain. Thr-347 is subject to Phosphothreonine. Residues 361-408 (EVEWDAFSIPELQNFLTILEKEEQDKIHQLQKKYNKFRQKLEEALRES) form the SARAH domain.

In terms of assembly, interacts directly with activated HRAS; a RASSF5-STK4/MST1 complex probably associates with activated HRAS. Interacts with KRAS. Probably interacts with Ras-like GTPases RRAS, MRAS, RAP1B, RAP2A and RALA. Interacts with RRAS2. Can self-associate. Interacts with RSSF1 isoform A. The RSSF1 isoform A-RSSF5 heterodimer probably mediates the association of RSSF1 with HRAS. Isoform 2 interacts with activated RAP1A and ITGAL/LFA-1. Binds STK4/MST1, inhibiting STK4/MST1 autoactivation.

The protein resides in the cytoplasm. It is found in the cytoskeleton. Functionally, potential tumor suppressor. Seems to be involved in lymphocyte adhesion by linking RAP1A activation upon T-cell receptor or chemokine stimulation to integrin activation. Isoform 2 stimulates lymphocyte polarization and the patch-like distribution of ITGAL/LFA-1, resulting in an enhanced adhesion to ICAM1. Together with RAP1A may participate in regulation of microtubule growth. The association of isoform 2 with activated RAP1A is required for directional movement of endothelial cells during wound healing. May be involved in regulation of Ras apoptotic function. The RASSF5-STK4/MST1 complex may mediate HRAS and KRAS induced apoptosis. The protein is Ras association domain-containing protein 5 (Rassf5) of Mus musculus (Mouse).